An 86-amino-acid chain; its full sequence is MTLSFDDAAATVKTLKTSPSNDELLKLYALFKQGTVGDNTTDKPGMFDLKGKAKWSAWDEKKGLAKDDAQKAYVALVEELIAKYGA.

Residues 1–86 (MTLSFDDAAA…VEELIAKYGA (86 aa)) enclose the ACB domain. Residues lysine 13, 28–32 (YALFK), lysine 50, lysine 54, and tyrosine 73 contribute to the an acyl-CoA site.

The protein belongs to the ACBP family.

Binds medium- and long-chain acyl-CoA esters with very high affinity and may function as an intracellular carrier of acyl-CoA esters. This is Acyl-CoA-binding protein homolog 1 (acbp-1) from Caenorhabditis elegans.